The primary structure comprises 122 residues: Large ribosomal subunit protein uL14 (122 aa).

It belongs to the universal ribosomal protein uL14 family. In terms of assembly, part of the 50S ribosomal subunit. Forms a cluster with proteins L3 and L19. In the 70S ribosome, L14 and L19 interact and together make contacts with the 16S rRNA in bridges B5 and B8.

Its function is as follows. Binds to 23S rRNA. Forms part of two intersubunit bridges in the 70S ribosome. This chain is Large ribosomal subunit protein uL14, found in Kineococcus radiotolerans (strain ATCC BAA-149 / DSM 14245 / SRS30216).